A 254-amino-acid chain; its full sequence is Imidazole glycerol phosphate synthase subunit HisF (254 aa).

Residues Asp-11 and Asp-130 contribute to the active site.

Belongs to the HisA/HisF family. In terms of assembly, heterodimer of HisH and HisF.

It localises to the cytoplasm. The catalysed reaction is 5-[(5-phospho-1-deoxy-D-ribulos-1-ylimino)methylamino]-1-(5-phospho-beta-D-ribosyl)imidazole-4-carboxamide + L-glutamine = D-erythro-1-(imidazol-4-yl)glycerol 3-phosphate + 5-amino-1-(5-phospho-beta-D-ribosyl)imidazole-4-carboxamide + L-glutamate + H(+). It participates in amino-acid biosynthesis; L-histidine biosynthesis; L-histidine from 5-phospho-alpha-D-ribose 1-diphosphate: step 5/9. IGPS catalyzes the conversion of PRFAR and glutamine to IGP, AICAR and glutamate. The HisF subunit catalyzes the cyclization activity that produces IGP and AICAR from PRFAR using the ammonia provided by the HisH subunit. This Solibacter usitatus (strain Ellin6076) protein is Imidazole glycerol phosphate synthase subunit HisF.